Here is a 276-residue protein sequence, read N- to C-terminus: MADADAQRQAEEDANLQLPPYPHPPPFYLKFTTENKDRLDEIKKEDGIDTASDGGKSAQLSTEQILALPTELRYLIPPEPPADTEEFNVFGTINQLKDRDTFNGTMEYISQALAKLLPDWKYEQLYPTTDASNSASSTLDRQRYLFRFLRSILVAYIELLGIVAINPTDELKDDKLKDILTMVTNMHALINEYRPHQARETLISEMERQVEKKKMEIQGVRKMKERVGEVLEGFGREIPSEKAEDRTEEAAVTSEEERKRDAQRQMWQAMDEMLSQ.

Basic and acidic residues-rich tracts occupy residues 1 to 11 (MADADAQRQAE) and 234 to 263 (FGREIPSEKAEDRTEEAAVTSEEERKRDAQ). 2 disordered regions span residues 1–27 (MADADAQRQAEEDANLQLPPYPHPPPF) and 234–276 (FGRE…MLSQ).

The protein belongs to the Mediator complex subunit 7 family. In terms of assembly, component of the Mediator complex.

The protein resides in the nucleus. Its function is as follows. Component of the Mediator complex, a coactivator involved in the regulated transcription of nearly all RNA polymerase II-dependent genes. Mediator functions as a bridge to convey information from gene-specific regulatory proteins to the basal RNA polymerase II transcription machinery. Mediator is recruited to promoters by direct interactions with regulatory proteins and serves as a scaffold for the assembly of a functional preinitiation complex with RNA polymerase II and the general transcription factors. This is Mediator of RNA polymerase II transcription subunit 7 (MED7) from Phaeosphaeria nodorum (strain SN15 / ATCC MYA-4574 / FGSC 10173) (Glume blotch fungus).